Consider the following 447-residue polypeptide: UDP-N-acetylglucosamine 1-carboxyvinyltransferase (447 aa).

27-28 (KN) contacts phosphoenolpyruvate. Arg-97 contributes to the UDP-N-acetyl-alpha-D-glucosamine binding site. The active-site Proton donor is the Cys-121. At Cys-121 the chain carries 2-(S-cysteinyl)pyruvic acid O-phosphothioketal. UDP-N-acetyl-alpha-D-glucosamine-binding positions include 126 to 130 (RPVDL), Asp-314, and Val-336.

It belongs to the EPSP synthase family. MurA subfamily.

Its subcellular location is the cytoplasm. It carries out the reaction phosphoenolpyruvate + UDP-N-acetyl-alpha-D-glucosamine = UDP-N-acetyl-3-O-(1-carboxyvinyl)-alpha-D-glucosamine + phosphate. The protein operates within cell wall biogenesis; peptidoglycan biosynthesis. Its function is as follows. Cell wall formation. Adds enolpyruvyl to UDP-N-acetylglucosamine. In Trichormus variabilis (strain ATCC 29413 / PCC 7937) (Anabaena variabilis), this protein is UDP-N-acetylglucosamine 1-carboxyvinyltransferase.